The sequence spans 338 residues: Glyceraldehyde-3-phosphate dehydrogenase 2 (338 aa).

Residues 11–12 (RI), aspartate 33, and arginine 78 contribute to the NAD(+) site. Residues 149–151 (SCT), threonine 180, 209–210 (TG), and arginine 232 each bind D-glyceraldehyde 3-phosphate. Cysteine 150 acts as the Nucleophile in catalysis. Asparagine 314 is an NAD(+) binding site.

This sequence belongs to the glyceraldehyde-3-phosphate dehydrogenase family. As to quaternary structure, homotetramer.

The protein localises to the cytoplasm. The enzyme catalyses D-glyceraldehyde 3-phosphate + phosphate + NAD(+) = (2R)-3-phospho-glyceroyl phosphate + NADH + H(+). It participates in carbohydrate degradation; glycolysis; pyruvate from D-glyceraldehyde 3-phosphate: step 1/5. This Agaricus bisporus (White button mushroom) protein is Glyceraldehyde-3-phosphate dehydrogenase 2 (gpd2).